Reading from the N-terminus, the 486-residue chain is Cardiolipin synthase A (486 aa).

Helical transmembrane passes span 3–23 and 38–58; these read TFYT…IAGV and MAWL…YLSF. PLD phosphodiesterase domains lie at 219-246 and 399-426; these read MDLR…VDPR and KDGL…DMRS. Catalysis depends on residues His-224, Lys-226, Asp-231, His-404, Lys-406, and Asp-411.

The protein belongs to the phospholipase D family. Cardiolipin synthase subfamily. ClsA sub-subfamily.

Its subcellular location is the cell inner membrane. The catalysed reaction is 2 a 1,2-diacyl-sn-glycero-3-phospho-(1'-sn-glycerol) = a cardiolipin + glycerol. In terms of biological role, catalyzes the reversible phosphatidyl group transfer from one phosphatidylglycerol molecule to another to form cardiolipin (CL) (diphosphatidylglycerol) and glycerol. The polypeptide is Cardiolipin synthase A (Pectobacterium atrosepticum (strain SCRI 1043 / ATCC BAA-672) (Erwinia carotovora subsp. atroseptica)).